The following is a 339-amino-acid chain: Sulfate/thiosulfate import ATP-binding protein CysA (339 aa).

The ABC transporter domain occupies 3–237 (IAIRSVEKQF…PETAFVCGFV (235 aa)). 35-42 (GPSGSGKT) provides a ligand contact to ATP.

The protein belongs to the ABC transporter superfamily. Sulfate/tungstate importer (TC 3.A.1.6) family. The complex is composed of two ATP-binding proteins (CysA), two transmembrane proteins (CysT and CysW) and a solute-binding protein (CysP).

The protein resides in the cell inner membrane. The catalysed reaction is sulfate(out) + ATP + H2O = sulfate(in) + ADP + phosphate + H(+). The enzyme catalyses thiosulfate(out) + ATP + H2O = thiosulfate(in) + ADP + phosphate + H(+). Part of the ABC transporter complex CysAWTP involved in sulfate/thiosulfate import. Responsible for energy coupling to the transport system. This Caulobacter vibrioides (strain ATCC 19089 / CIP 103742 / CB 15) (Caulobacter crescentus) protein is Sulfate/thiosulfate import ATP-binding protein CysA.